Consider the following 530-residue polypeptide: C2H2-type transcription factor MSN2 (530 aa).

2 C2H2-type zinc fingers span residues 409–432 and 438–460; these read FVCD…RSLH and FECN…ARTH.

The protein resides in the nucleus. It is found in the cytoplasm. Transcription factor that acts as a key downstream transcription factor in the HOG1-MAPK pathway. Plays crucial roles in the regulation of conidiation, virulence and multi-stress responses. In addition to regulating the expression of genes specifically involved in stress-response, conidiation and virulence, controls also expression of cellular signaling factors. This is C2H2-type transcription factor MSN2 from Metarhizium robertsii (strain ARSEF 23 / ATCC MYA-3075) (Metarhizium anisopliae (strain ARSEF 23)).